The chain runs to 198 residues: 7-methyl-GTP pyrophosphatase (198 aa).

The active-site Proton acceptor is the Asp75.

The protein belongs to the Maf family. YceF subfamily. A divalent metal cation serves as cofactor.

The protein resides in the cytoplasm. It catalyses the reaction N(7)-methyl-GTP + H2O = N(7)-methyl-GMP + diphosphate + H(+). Nucleoside triphosphate pyrophosphatase that hydrolyzes 7-methyl-GTP (m(7)GTP). May have a dual role in cell division arrest and in preventing the incorporation of modified nucleotides into cellular nucleic acids. This chain is 7-methyl-GTP pyrophosphatase, found in Bartonella quintana (strain Toulouse) (Rochalimaea quintana).